The chain runs to 526 residues: Thioredoxin reductase 2, mitochondrial (526 aa).

The N-terminal 36 residues, Met1–Ala36, are a transit peptide targeting the mitochondrion. Asp43 to Tyr72 provides a ligand contact to FAD. Position 81 is an N6-succinyllysine (Lys81). An intrachain disulfide couples Cys88 to Cys93. N6-succinyllysine occurs at positions 177 and 331. The Proton acceptor role is filled by His499. The cysteinyl-selenocysteine (Cys-Sec) cross-link spans Cys524 to Sec525. A non-standard amino acid (selenocysteine) is located at residue Sec525.

Belongs to the class-I pyridine nucleotide-disulfide oxidoreductase family. As to quaternary structure, homodimer. Requires FAD as cofactor. In terms of tissue distribution, expressed in liver, kidney, adrenal gland and heart.

The protein resides in the mitochondrion. The catalysed reaction is [thioredoxin]-dithiol + NADP(+) = [thioredoxin]-disulfide + NADPH + H(+). Functionally, involved in the control of reactive oxygen species levels and the regulation of mitochondrial redox homeostasis. Maintains mitochondrial thioredoxin in a reduced state. May play a role in redox-regulated cell signaling. The polypeptide is Thioredoxin reductase 2, mitochondrial (Txnrd2) (Rattus norvegicus (Rat)).